A 131-amino-acid chain; its full sequence is Fluoride-specific ion channel FluC 2 (131 aa).

4 helical membrane-spanning segments follow: residues 5–25 (FGVAVGGALGALARYGVSLLV), 39–59 (LATLLVNVLGSFLLAFITTLA), 70–90 (LAVGTGFIGALTTFSTFAWES), and 104–124 (LYVLGNLVLGYAAVLLGRALA). Positions 78 and 81 each coordinate Na(+).

This sequence belongs to the fluoride channel Fluc/FEX (TC 1.A.43) family.

The protein localises to the cell membrane. It carries out the reaction fluoride(in) = fluoride(out). Its activity is regulated as follows. Na(+) is not transported, but it plays an essential structural role and its presence is essential for fluoride channel function. Functionally, fluoride-specific ion channel. Important for reducing fluoride concentration in the cell, thus reducing its toxicity. The protein is Fluoride-specific ion channel FluC 2 of Deinococcus geothermalis (strain DSM 11300 / CIP 105573 / AG-3a).